A 236-amino-acid chain; its full sequence is ATP-dependent dethiobiotin synthetase BioD (236 aa).

Mg(2+) is bound at residue Thr19. The active site involves Lys40. Positions 61 and 122 each coordinate Mg(2+). Residues Asp61, 122-125 (EGVG), 182-183 (NT), and 211-213 (PRL) contribute to the ATP site.

It belongs to the dethiobiotin synthetase family. As to quaternary structure, homodimer. Mg(2+) serves as cofactor.

It localises to the cytoplasm. The enzyme catalyses (7R,8S)-7,8-diammoniononanoate + CO2 + ATP = (4R,5S)-dethiobiotin + ADP + phosphate + 3 H(+). It participates in cofactor biosynthesis; biotin biosynthesis; biotin from 7,8-diaminononanoate: step 1/2. In terms of biological role, catalyzes a mechanistically unusual reaction, the ATP-dependent insertion of CO2 between the N7 and N8 nitrogen atoms of 7,8-diaminopelargonic acid (DAPA, also called 7,8-diammoniononanoate) to form a ureido ring. In Janthinobacterium sp. (strain Marseille) (Minibacterium massiliensis), this protein is ATP-dependent dethiobiotin synthetase BioD.